A 102-amino-acid polypeptide reads, in one-letter code: Urease subunit beta (102 aa).

Belongs to the urease beta subunit family. As to quaternary structure, heterotrimer of UreA (gamma), UreB (beta) and UreC (alpha) subunits. Three heterotrimers associate to form the active enzyme.

The protein localises to the cytoplasm. The enzyme catalyses urea + 2 H2O + H(+) = hydrogencarbonate + 2 NH4(+). It functions in the pathway nitrogen metabolism; urea degradation; CO(2) and NH(3) from urea (urease route): step 1/1. In Pseudomonas syringae pv. tomato (strain ATCC BAA-871 / DC3000), this protein is Urease subunit beta.